A 329-amino-acid polypeptide reads, in one-letter code: Probable fructokinase-2 (329 aa).

Belongs to the carbohydrate kinase PfkB family.

It catalyses the reaction D-fructose + ATP = D-fructose 6-phosphate + ADP + H(+). The protein operates within glycan biosynthesis; starch biosynthesis. May play an important role in maintaining the flux of carbon towards starch formation. The polypeptide is Probable fructokinase-2 (Arabidopsis thaliana (Mouse-ear cress)).